The following is a 755-amino-acid chain: Xaa-Pro dipeptidyl-peptidase (755 aa).

Residues serine 348, aspartate 468, and histidine 498 each act as charge relay system in the active site.

It belongs to the peptidase S15 family. In terms of assembly, homodimer.

The protein resides in the cytoplasm. The enzyme catalyses Hydrolyzes Xaa-Pro-|- bonds to release unblocked, N-terminal dipeptides from substrates including Ala-Pro-|-p-nitroanilide and (sequentially) Tyr-Pro-|-Phe-Pro-|-Gly-Pro-|-Ile.. Its function is as follows. Removes N-terminal dipeptides sequentially from polypeptides having unsubstituted N-termini provided that the penultimate residue is proline. The chain is Xaa-Pro dipeptidyl-peptidase from Streptococcus thermophilus (strain CNRZ 1066).